The following is a 103-amino-acid chain: Large ribosomal subunit protein uL24 (103 aa).

The protein belongs to the universal ribosomal protein uL24 family. In terms of assembly, part of the 50S ribosomal subunit.

Functionally, one of two assembly initiator proteins, it binds directly to the 5'-end of the 23S rRNA, where it nucleates assembly of the 50S subunit. Its function is as follows. One of the proteins that surrounds the polypeptide exit tunnel on the outside of the subunit. The sequence is that of Large ribosomal subunit protein uL24 from Christiangramia forsetii (strain DSM 17595 / CGMCC 1.15422 / KT0803) (Gramella forsetii).